The primary structure comprises 280 residues: Energy-coupling factor transporter ATP-binding protein EcfA1 (280 aa).

In terms of domain architecture, ABC transporter spans 7–241 (IEVAHLKYEY…GQRLLDLGLD (235 aa)). 41 to 48 (GHNGSGKS) is an ATP binding site.

It belongs to the ABC transporter superfamily. Energy-coupling factor EcfA family. In terms of assembly, forms a stable energy-coupling factor (ECF) transporter complex composed of 2 membrane-embedded substrate-binding proteins (S component), 2 ATP-binding proteins (A component) and 2 transmembrane proteins (T component).

It localises to the cell membrane. ATP-binding (A) component of a common energy-coupling factor (ECF) ABC-transporter complex. Unlike classic ABC transporters this ECF transporter provides the energy necessary to transport a number of different substrates. This chain is Energy-coupling factor transporter ATP-binding protein EcfA1, found in Latilactobacillus sakei subsp. sakei (strain 23K) (Lactobacillus sakei subsp. sakei).